The chain runs to 638 residues: Threonine--tRNA ligase (638 aa).

Residues 1-61 (MPVITLPDGS…EHDARIEIVT (61 aa)) form the TGS domain. The tract at residues 243–534 (DHRKIAKAQD…LIEEYAGHFP (292 aa)) is catalytic. C334, H385, and H511 together coordinate Zn(2+).

The protein belongs to the class-II aminoacyl-tRNA synthetase family. Homodimer. Zn(2+) serves as cofactor.

Its subcellular location is the cytoplasm. The enzyme catalyses tRNA(Thr) + L-threonine + ATP = L-threonyl-tRNA(Thr) + AMP + diphosphate + H(+). Functionally, catalyzes the attachment of threonine to tRNA(Thr) in a two-step reaction: L-threonine is first activated by ATP to form Thr-AMP and then transferred to the acceptor end of tRNA(Thr). Also edits incorrectly charged L-seryl-tRNA(Thr). In Idiomarina loihiensis (strain ATCC BAA-735 / DSM 15497 / L2-TR), this protein is Threonine--tRNA ligase.